The following is a 1365-amino-acid chain: ATP-dependent RNA helicase DHX29 (1365 aa).

A compositionally biased stretch (basic residues) spans 1–10 (MGGKNKKHKA). Disordered stretches follow at residues 1 to 74 (MGGK…NDSG), 174 to 222 (SQEF…EETT), and 235 to 257 (AEQQ…EKFD). Composition is skewed to low complexity over residues 11–36 (PGAA…VGEA) and 43–53 (ARPAPAVPTGA). S69, S190, and S198 each carry phosphoserine. The span at 187-203 (KFQSVQIQATLSPPQQT) shows a compositional bias: polar residues. Over residues 206–222 (KRQEEDPKIKPKKEETT) the composition is skewed to basic and acidic residues. The stretch at 281 to 308 (LEKNKQGQKEAQEKIRKFQREMETLEDH) forms a coiled coil. Residues 500 to 524 (QQQQQQQQRPESEKGGSEDPEESWE) are disordered. Residues 581–754 (VETLKRHRVV…FTHCPILRIS (174 aa)) enclose the Helicase ATP-binding domain. 594–601 (GETGSGKS) contacts ATP. The DEAH box signature appears at 701–704 (DEVH). In terms of domain architecture, Helicase C-terminal spans 848–1025 (LILELLVYLD…ELCLHIMKCD (178 aa)).

This sequence belongs to the DEAD box helicase family. DEAH subfamily. Part of the 43S pre-initiation complex (PIC) that contains at least Met-tRNA, EIF1, EIF1A (EIF1AX or EIF1AY), EIF2S1, EIF2S2, EIF2S3, EIF3A, EIF3B, EIF3C, EIF3D, EIF3E, EIF3F, EIF3G, EIF3H, EIF3I, EIF3J, EIF3K, EIF3L, EIF3M, DHX29 and the 40S ribosomal subunit.

The protein resides in the cytoplasm. It carries out the reaction ATP + H2O = ADP + phosphate + H(+). Its function is as follows. ATP-binding RNA helicase involved in translation initiation. Part of the 43S pre-initiation complex that is required for efficient initiation on mRNAs of higher eukaryotes with structured 5'-UTRs by promoting efficient NTPase-dependent 48S complex formation. Specifically binds to the 40S ribosome near the mRNA entrance. Does not possess a processive helicase activity. This is ATP-dependent RNA helicase DHX29 from Mus musculus (Mouse).